Here is a 379-residue protein sequence, read N- to C-terminus: Centrosomal protein 43 (379 aa).

Residues 70-102 form the LisH domain; that stretch reads DGRLVASLVAEFLQFFNLDFTLAVFQPETSTLQ. Positions 139–196 are disordered; it reads EKGPTTGEGALDLSDVHPPPKSPEGKTSAQTTPSKKANNEANQSDTSVSLSEPKSKSS. Position 143 is a phosphothreonine (T143). 2 positions are modified to phosphoserine: S152 and S160. Over residues 163–184 the composition is skewed to polar residues; sequence GKTSAQTTPSKKANNEANQSDT. Position 170 is a phosphothreonine (T170). Position 182 is a phosphoserine (S182). Positions 185-196 are enriched in low complexity; the sequence is SVSLSEPKSKSS. T214 is modified (phosphothreonine). The interval 216–288 is disordered; the sequence is DGKDKAGLCP…APSLKDSESK (73 aa). Residues 225–236 are compositionally biased toward acidic residues; sequence PDEDDMEGDSFF. Over residues 239 to 255 the composition is skewed to basic and acidic residues; that stretch reads PIPKPEKTYGLRSEPRK. Residues 266 to 282 are compositionally biased toward low complexity; sequence APPLKSGLSSLAGAPSL. Residues S281 and S306 each carry the phosphoserine modification. Y317 bears the Phosphotyrosine mark.

This sequence belongs to the CEP43 family. Homodimer. Part of a ternary complex that contains CEP350, CEP43 and MAPRE1. Interacts directly with CEP350 and MAPRE1. Interacts with CEP19. Interacts (via N-terminus) with CEP350 (via C-terminus).

The protein resides in the cytoplasm. It localises to the cytoskeleton. The protein localises to the microtubule organizing center. Its subcellular location is the centrosome. It is found in the centriole. The protein resides in the cilium basal body. Functionally, required for anchoring microtubules to the centrosomes. Required for ciliation. The polypeptide is Centrosomal protein 43 (CEP43) (Macaca fascicularis (Crab-eating macaque)).